The following is a 950-amino-acid chain: Oxysterol-binding protein-related protein 1 (950 aa).

An interaction with RAB7A region spans residues 1–237 (MNTEAEQQLL…NKVVHKALKR (237 aa)). ANK repeat units lie at residues 47-76 (LGWT…KVNM), 80-109 (MGDT…DSTV), and 175-204 (LGNT…DPSL). The 100-residue stretch at 235-334 (LKRYEGPLWK…WLEAIEEHSA (100 aa)) folds into the PH domain. The stretch at 430–463 (NFKLEQEQEKNKILSEALETLATEHHELERSLVE) forms a coiled coil. An FFAT motif is present at residues 469–483 (SILSEEEFYDALSGS). Phosphoserine is present on Ser499. 2 disordered regions span residues 502 to 530 (ENEV…SNGI) and 795 to 821 (KKNT…VPDS). Residues 879 to 913 (RAMENGEIDLASEEKKRLEEKQRAARKNRSKSEED) adopt a coiled-coil conformation.

Belongs to the OSBP family. As to quaternary structure, interacts (via FFAT motif) with VAPA and VAPB. Interacts with the GTP-bound form of RAB7A. Interacts with OAS1B. Interacts (via FFAT motif) with MOSPD2 (via MSP domain). Ubiquitous.

Its subcellular location is the late endosome. Its function is as follows. Binds phospholipids; exhibits strong binding to phosphatidic acid and weak binding to phosphatidylinositol 3-phosphate. Stabilizes GTP-bound RAB7A on late endosomes/lysosomes and alters functional properties of late endocytic compartments via its interaction with RAB7A. Binds 25-hydroxycholesterol and cholesterol. The chain is Oxysterol-binding protein-related protein 1 from Mus musculus (Mouse).